The chain runs to 614 residues: Dihydroxy-acid dehydratase (614 aa).

A Mg(2+)-binding site is contributed by D81. C122 contributes to the [2Fe-2S] cluster binding site. Positions 123 and 124 each coordinate Mg(2+). At K124 the chain carries N6-carboxylysine. Residue C193 participates in [2Fe-2S] cluster binding. E489 contacts Mg(2+). S515 (proton acceptor) is an active-site residue.

The protein belongs to the IlvD/Edd family. Homodimer. [2Fe-2S] cluster serves as cofactor. Requires Mg(2+) as cofactor.

It catalyses the reaction (2R)-2,3-dihydroxy-3-methylbutanoate = 3-methyl-2-oxobutanoate + H2O. The catalysed reaction is (2R,3R)-2,3-dihydroxy-3-methylpentanoate = (S)-3-methyl-2-oxopentanoate + H2O. Its pathway is amino-acid biosynthesis; L-isoleucine biosynthesis; L-isoleucine from 2-oxobutanoate: step 3/4. It functions in the pathway amino-acid biosynthesis; L-valine biosynthesis; L-valine from pyruvate: step 3/4. Its function is as follows. Functions in the biosynthesis of branched-chain amino acids. Catalyzes the dehydration of (2R,3R)-2,3-dihydroxy-3-methylpentanoate (2,3-dihydroxy-3-methylvalerate) into 2-oxo-3-methylpentanoate (2-oxo-3-methylvalerate) and of (2R)-2,3-dihydroxy-3-methylbutanoate (2,3-dihydroxyisovalerate) into 2-oxo-3-methylbutanoate (2-oxoisovalerate), the penultimate precursor to L-isoleucine and L-valine, respectively. The protein is Dihydroxy-acid dehydratase of Hahella chejuensis (strain KCTC 2396).